A 768-amino-acid polypeptide reads, in one-letter code: Levansucrase (768 aa).

An N-terminal signal peptide occupies residues 1–36 (MLENKKHKKMSLSGKSLLMGTLSTAAIVLSASTVNA). Composition is skewed to polar residues over residues 57–68 (SASVNKNDNSGL), 80–99 (TETN…SQVN), 106–134 (SSTQ…QDSD), and 143–153 (NNSQGQSSTSS). The interval 57–158 (SASVNKNDNS…SSTSSEKTEL (102 aa)) is disordered. 3 residues coordinate sucrose: Trp-250, Asp-251, and Ser-320. Asp-251 serves as the catalytic Nucleophile. Residue Asp-398 participates in Ca(2+) binding. Sucrose is bound by residues Arg-403 and Asp-404. Gln-429, Asn-468, and Asp-502 together coordinate Ca(2+). Residue Glu-503 participates in sucrose binding. Glu-505 serves as the catalytic Proton donor/acceptor. Arg-523 is a binding site for sucrose. The disordered stretch occupies residues 688 to 736 (HQPVTPNVPTTPEKPENPTTPNTPDTPRTPEVPTTPVKKTTQSELPKAG). Residues 691–727 (VTPNVPTTPEKPENPTTPNTPDTPRTPEVPTTPVKKT) are compositionally biased toward low complexity. The LPXTG sorting signal signature appears at 732 to 736 (LPKAG). The residue at position 735 (Ala-735) is a Pentaglycyl murein peptidoglycan amidated alanine. Residues 736–768 (GAKDGIAATILGAISSMLGVIGLAGISKRKRNN) constitute a propeptide, removed by sortase.

Belongs to the glycosyl hydrolase 68 family.

Its subcellular location is the secreted. It localises to the cell wall. It is found in the cell surface. The catalysed reaction is [6)-beta-D-fructofuranosyl-(2-&gt;](n) alpha-D-glucopyranoside + sucrose = [6)-beta-D-fructofuranosyl-(2-&gt;](n+1) alpha-D-glucopyranoside + D-glucose. With respect to regulation, calcium ions are required for optimal activity, but do not seem to be essential since addition of EDTA causes only a 48% drop in activity. Ca(2+) may play an important structural role and promote stability of levansucrase. Fructosyltransferase that catalyzes the polymerization of the fructose moiety of sucrose to produce levan polymer and the fructo-oligosaccharide (FOS) 1-kestose. Is also able to convert raffinose into a fructan polymer and a single oligosaccharide (most likely Gal-Glc-Frc-Frc) in vitro; however, L.gasseri strain DSM 20077 is unable to ferment raffinose. Also displays sucrose hydrolase activity. In Lactobacillus gasseri, this protein is Levansucrase.